The sequence spans 362 residues: Phosphoserine aminotransferase (362 aa).

Arg42 is a binding site for L-glutamate. Residues 76-77 (AR), Trp102, Thr152, Asp172, and Gln195 contribute to the pyridoxal 5'-phosphate site. The residue at position 196 (Lys196) is an N6-(pyridoxal phosphate)lysine. 237–238 (NT) lines the pyridoxal 5'-phosphate pocket.

This sequence belongs to the class-V pyridoxal-phosphate-dependent aminotransferase family. SerC subfamily. Homodimer. It depends on pyridoxal 5'-phosphate as a cofactor.

The protein localises to the cytoplasm. It catalyses the reaction O-phospho-L-serine + 2-oxoglutarate = 3-phosphooxypyruvate + L-glutamate. The catalysed reaction is 4-(phosphooxy)-L-threonine + 2-oxoglutarate = (R)-3-hydroxy-2-oxo-4-phosphooxybutanoate + L-glutamate. The protein operates within amino-acid biosynthesis; L-serine biosynthesis; L-serine from 3-phospho-D-glycerate: step 2/3. It participates in cofactor biosynthesis; pyridoxine 5'-phosphate biosynthesis; pyridoxine 5'-phosphate from D-erythrose 4-phosphate: step 3/5. Its function is as follows. Catalyzes the reversible conversion of 3-phosphohydroxypyruvate to phosphoserine and of 3-hydroxy-2-oxo-4-phosphonooxybutanoate to phosphohydroxythreonine. This Haemophilus influenzae (strain ATCC 51907 / DSM 11121 / KW20 / Rd) protein is Phosphoserine aminotransferase.